The chain runs to 378 residues: Cytochrome P450 monooxygenase pytD (378 aa).

Cys321 is a heme binding site.

This sequence belongs to the cytochrome P450 family. Heme is required as a cofactor.

Its pathway is secondary metabolite biosynthesis. Its function is as follows. Cytochrome P450 monooxygenase pytD; part of the gene cluster that mediates the biosynthesis of pyranterreones, a family of antioxidative compounds. The first step of pyranonigrins biosynthesis is performed by the hybrid PKS-NRPS synthetase pytA that condenses 4 malonyl-CoA units ato the acetyl starter unit by the modular PKS of pytA. The acyl chain is then connected to an L-serine through the amide bond by the modular NRPS of pytA. A tetramic acid is formed and released from the PKS-NRPS pytA to give pyranterreone 5 with the help of the thioesterase pytI. Pyranterreone 5 could be methylated by pytC to afford pyranterreone 6. Both pyranterreones 5 and 6 are subsequently oxidized by the FAD-linked oxidoreductase pytB and the cytochrome P450 monooxygenase pytD to form the fused gamma-pyrone core, resulting in pyranterreones 7 and 11, respectively. The hydroxy group at C-8 of pyranterreones 7 and 11 are dehydrated by the aspartyl protease pytH to form a delta-7 double bond to give pyranterreones 3 and 1, 2 accordingly. The exo-methylene of pyranterreone 3 could be reduced into a pendant methyl by reductase pytE to provide pyranterreone 4, also known as cordylactam. Pyranterreone 4 can be reconverted to pyranterreone 3 through pytB-catalyzed dehydrogenation or further oxidized to pyranterreones 9 and 10. This Aspergillus terreus (strain NIH 2624 / FGSC A1156) protein is Cytochrome P450 monooxygenase pytD.